Here is a 130-residue protein sequence, read N- to C-terminus: MASVKLASLMVLFATLGMFLTKNVGAASCNGVCSPFEMPPCGSSACRCIPVGLVVGYCRHPSGVFLRTNDEHPNLCESDADCRKKGSGNFCGHYPNPDIEYGWCFASKSEAEDFFSKITQKDLLKSVSTA.

Residues 1 to 26 form the signal peptide; sequence MASVKLASLMVLFATLGMFLTKNVGA. 3 disulfide bridges follow: C29–C46, C33–C48, and C41–C58. 2 propeptides span residues 64-69 and 123-130; these read VFLRTN and LLKSVSTA.

Post-translationally, the C-terminal glycine may be removed from PA1b. Major component of both the cotyledons and embryonic axes of mature seeds.

In terms of biological role, PA1b binds to basic 7S globulin (BG) and stimulates its phosphorylation activity. Involved in the signal transduction system to regulate the growth and differentiation as a hormone peptide. Toxic to various insects through binding to a high affinity binding site in the insect gut. The polypeptide is Albumin-1 B (Pisum sativum (Garden pea)).